The sequence spans 377 residues: WAT1-related protein At3g56620 (377 aa).

The next 10 helical transmembrane spans lie at 13-33, 40-60, 67-87, 102-122, 142-162, 183-203, 210-230, 235-255, 274-294, and 299-319; these read FAMV…KVVL, YVLV…FALL, PKMT…GPLI, TFAG…SIIC, LVIV…ITFL, VFLL…AATL, LSLS…LTFV, LSAW…AGIM, IFVT…GFLI, and LNLG…TVLW. 2 consecutive EamA domains span residues 22–152 and 190–318; these read YAGM…MLMI and FSWA…CTVL.

The protein belongs to the drug/metabolite transporter (DMT) superfamily. Plant drug/metabolite exporter (P-DME) (TC 2.A.7.4) family.

Its subcellular location is the membrane. The polypeptide is WAT1-related protein At3g56620 (Arabidopsis thaliana (Mouse-ear cress)).